Reading from the N-terminus, the 366-residue chain is Ribosomal RNA large subunit methyltransferase M (366 aa).

S-adenosyl-L-methionine is bound by residues Ser-188, 221–224, Asp-240, Asp-260, and Asp-277; that span reads CPGG. Lys-306 (proton acceptor) is an active-site residue.

Belongs to the class I-like SAM-binding methyltransferase superfamily. RNA methyltransferase RlmE family. RlmM subfamily. As to quaternary structure, monomer.

It localises to the cytoplasm. It catalyses the reaction cytidine(2498) in 23S rRNA + S-adenosyl-L-methionine = 2'-O-methylcytidine(2498) in 23S rRNA + S-adenosyl-L-homocysteine + H(+). Its function is as follows. Catalyzes the 2'-O-methylation at nucleotide C2498 in 23S rRNA. In Salmonella heidelberg (strain SL476), this protein is Ribosomal RNA large subunit methyltransferase M.